A 266-amino-acid chain; its full sequence is Glucosamine-6-phosphate deaminase (266 aa).

The Proton acceptor; for enolization step role is filled by Asp72. The active-site For ring-opening step is the Asp141. His143 acts as the Proton acceptor; for ring-opening step in catalysis. The active-site For ring-opening step is the Glu148.

Belongs to the glucosamine/galactosamine-6-phosphate isomerase family. NagB subfamily. As to quaternary structure, homohexamer.

It catalyses the reaction alpha-D-glucosamine 6-phosphate + H2O = beta-D-fructose 6-phosphate + NH4(+). It functions in the pathway amino-sugar metabolism; N-acetylneuraminate degradation; D-fructose 6-phosphate from N-acetylneuraminate: step 5/5. Allosterically activated by N-acetylglucosamine 6-phosphate (GlcNAc6P). Functionally, catalyzes the reversible isomerization-deamination of glucosamine 6-phosphate (GlcN6P) to form fructose 6-phosphate (Fru6P) and ammonium ion. The sequence is that of Glucosamine-6-phosphate deaminase from Vibrio vulnificus (strain CMCP6).